The primary structure comprises 305 residues: Translation initiation factor eIF2B subunit alpha (305 aa).

Belongs to the eIF-2B alpha/beta/delta subunits family. In terms of assembly, component of the translation initiation factor 2B (eIF2B) complex which is a heterodecamer of two sets of five different subunits: alpha, beta, gamma, delta and epsilon. Subunits alpha, beta and delta comprise a regulatory subcomplex and subunits epsilon and gamma comprise a catalytic subcomplex. Within the complex, the hexameric regulatory complex resides at the center, with the two heterodimeric catalytic subcomplexes bound on opposite sides.

It is found in the cytoplasm. The protein resides in the cytosol. Activated by the chemical integrated stress response (ISR) inhibitor ISRIB which stimulates guanine nucleotide exchange factor activity for both phosphorylated and unphosphorylated eIF2. Its function is as follows. Acts as a component of the translation initiation factor 2B (eIF2B) complex, which catalyzes the exchange of GDP for GTP on eukaryotic initiation factor 2 (eIF2) gamma subunit. Its guanine nucleotide exchange factor activity is repressed when bound to eIF2 complex phosphorylated on the alpha subunit, thereby limiting the amount of methionyl-initiator methionine tRNA available to the ribosome and consequently global translation is repressed. The chain is Translation initiation factor eIF2B subunit alpha (EIF2B1) from Bos taurus (Bovine).